We begin with the raw amino-acid sequence, 427 residues long: Enolase (427 aa).

Q163 provides a ligand contact to (2R)-2-phosphoglycerate. The active-site Proton donor is E205. Residues D242, E285, and D312 each coordinate Mg(2+). Residues K337, R366, S367, and K388 each coordinate (2R)-2-phosphoglycerate. Residue K337 is the Proton acceptor of the active site.

It belongs to the enolase family. Mg(2+) serves as cofactor.

It is found in the cytoplasm. The protein resides in the secreted. Its subcellular location is the cell surface. The enzyme catalyses (2R)-2-phosphoglycerate = phosphoenolpyruvate + H2O. It participates in carbohydrate degradation; glycolysis; pyruvate from D-glyceraldehyde 3-phosphate: step 4/5. Functionally, catalyzes the reversible conversion of 2-phosphoglycerate (2-PG) into phosphoenolpyruvate (PEP). It is essential for the degradation of carbohydrates via glycolysis. This is Enolase from Variovorax paradoxus (strain S110).